Here is a 140-residue protein sequence, read N- to C-terminus: 3-hydroxyacyl-[acyl-carrier-protein] dehydratase FabZ (140 aa).

The active site involves histidine 47.

This sequence belongs to the thioester dehydratase family. FabZ subfamily.

It localises to the cytoplasm. It carries out the reaction a (3R)-hydroxyacyl-[ACP] = a (2E)-enoyl-[ACP] + H2O. Functionally, involved in unsaturated fatty acids biosynthesis. Catalyzes the dehydration of short chain beta-hydroxyacyl-ACPs and long chain saturated and unsaturated beta-hydroxyacyl-ACPs. The protein is 3-hydroxyacyl-[acyl-carrier-protein] dehydratase FabZ of Streptococcus uberis (strain ATCC BAA-854 / 0140J).